Here is a 103-residue protein sequence, read N- to C-terminus: Integration host factor subunit alpha (103 aa).

A disordered region spans residues 51-73; that stretch reads FGNFQLRDKPQRPGRNPKTGEEI.

It belongs to the bacterial histone-like protein family. As to quaternary structure, heterodimer of an alpha and a beta chain.

Functionally, this protein is one of the two subunits of integration host factor, a specific DNA-binding protein that functions in genetic recombination as well as in transcriptional and translational control. The polypeptide is Integration host factor subunit alpha (Azoarcus sp. (strain BH72)).